We begin with the raw amino-acid sequence, 707 residues long: NADP(+)-dependent formate dehydrogenase subunit beta (707 aa).

In terms of assembly, heterotetramer composed of two alpha (FdhA) and two beta (FdhB) subunits.

The protein localises to the cytoplasm. It catalyses the reaction formate + NADP(+) = CO2 + NADPH. Its activity is regulated as follows. Activity is very sensitive to oxygen. The activity in growing cells is enhanced when selenite and molybdate are added together to the growth medium. Tungstate replaces and is better than molybdate. Selenite is incorporated into the enzyme. Requires a sulfhydryl compound for activity. Inhibited by cyanide, EDTA, hypophosphite and mercaptoethanol. Sulfite inhibits the activity with NADP but not with methyl viologen as electron acceptor. Component of a dehydrogenase that catalyzes the NADP-dependent reduction of CO(2) to formate, the first step in the synthesis of the methyl group of acetate during synthesis of acetate from CO(2). In vitro, can use methyl viologen and benzyl viologen in addition to its natural electron acceptor. The protein is NADP(+)-dependent formate dehydrogenase subunit beta of Moorella thermoacetica (Clostridium thermoaceticum).